A 285-amino-acid chain; its full sequence is Tryptophan synthase alpha chain (285 aa).

Active-site proton acceptor residues include E53 and D64.

The protein belongs to the TrpA family. In terms of assembly, tetramer of two alpha and two beta chains.

The enzyme catalyses (1S,2R)-1-C-(indol-3-yl)glycerol 3-phosphate + L-serine = D-glyceraldehyde 3-phosphate + L-tryptophan + H2O. It functions in the pathway amino-acid biosynthesis; L-tryptophan biosynthesis; L-tryptophan from chorismate: step 5/5. Functionally, the alpha subunit is responsible for the aldol cleavage of indoleglycerol phosphate to indole and glyceraldehyde 3-phosphate. This is Tryptophan synthase alpha chain from Bordetella bronchiseptica (strain ATCC BAA-588 / NCTC 13252 / RB50) (Alcaligenes bronchisepticus).